The primary structure comprises 414 residues: Ena/VASP-like protein (414 aa).

In terms of domain architecture, WH1 spans 1 to 112 (MSEQSICQAR…NAMLFALNIM (112 aa)). Position 130 is a phosphoserine (serine 130). Residues 157 to 369 (ATGPILPPGH…SRVKPAGSVN (213 aa)) form a disordered region. Residues 179–204 (GPPPPPPPPVPPPPTGSTPPPPPPLP) show a composition bias toward pro residues. The segment covering 217–228 (SASGLAAALAGA) has biased composition (low complexity). Residues 220–240 (GLAAALAGAKLRRVQRPEDAS) form an EVH2 block A region. Positions 220–411 (GLAAALAGAK…DAIRQELSGI (192 aa)) are EVH2. The short motif at 229–232 (KLRR) is the KLKR element. Positions 240–251 (SGGSSPSGTSKS) are enriched in low complexity. Serine 244 and serine 257 each carry phosphoserine. Residues 263–280 (GGLMEEMNKLLAKRRKAA) form an EVH2 block B region. The span at 297–318 (EDPSTSPSPGTRATSQPPNSSE) shows a compositional bias: polar residues. Phosphoserine occurs at positions 302, 304, 327, 329, 339, 347, 352, and 367. A compositionally biased stretch (basic and acidic residues) spans 319–329 (AGRKPWERSNS). Residues 340–360 (RTPSVAKSPEAKSPLQSQPHS) form a required for interaction with ZDHHC17 region. Residues 377 to 411 (DLDRMKQEILEEVVRELHKVKEEIIDAIRQELSGI) are EVH2 block C.

This sequence belongs to the Ena/VASP family. In terms of assembly, homotetramer. Binds to the SH3 domains of ABL1, LYN and SRC. Also binds to profilin, with preference for isoform IIa of PFN2, and the WW domain of APBB1/FE65. Binds to SEMA6A. Interacts, via the Pro-rich region, with the C-terminal SH3 domain of DNMBP. Interacts with RAPH1. Binds, via the EVH1 domain, the Pro-rich domain of Listeria monocytogenes actA. Binds, via the EVH1 domain, the Pro-rich domain of ZYX. Interacts with FYB1. Interacts with ZDHHC17. In terms of processing, phosphorylated by PKA; phosphorylation abolishes binding to SH3 domains of ABL and SRC. In terms of tissue distribution, highest expression in thymus and spleen (at protein level). Low levels in placenta, ovary, testis, fat and lung (at protein level). Isoform 1 and isoform 2 are expressed in cortical neurons and glial cells.

It localises to the cytoplasm. The protein resides in the cytoskeleton. Its subcellular location is the stress fiber. It is found in the cell projection. The protein localises to the lamellipodium. Ena/VASP proteins are actin-associated proteins involved in a range of processes dependent on cytoskeleton remodeling and cell polarity such as axon guidance and lamellipodial and filopodial dynamics in migrating cells. EVL enhances actin nucleation and polymerization. The polypeptide is Ena/VASP-like protein (Evl) (Mus musculus (Mouse)).